A 693-amino-acid polypeptide reads, in one-letter code: Translation factor GUF1 homolog, mitochondrial (693 aa).

Residues 51–63 are compositionally biased toward polar residues; it reads SSSSTEKPTTSGT. The interval 51–78 is disordered; sequence SSSSTEKPTTSGTINGGGGKQKAASQPK. Residues 88–270 enclose the tr-type G domain; it reads QKIRNFSIIA…RIVQMVPPPP (183 aa). GTP is bound by residues 97-104, 163-167, and 217-220; these read AHIDHGKS, DTPGH, and NKID.

It belongs to the TRAFAC class translation factor GTPase superfamily. Classic translation factor GTPase family. LepA subfamily.

The protein localises to the mitochondrion inner membrane. The enzyme catalyses GTP + H2O = GDP + phosphate + H(+). In terms of biological role, promotes mitochondrial protein synthesis. May act as a fidelity factor of the translation reaction, by catalyzing a one-codon backward translocation of tRNAs on improperly translocated ribosomes. Binds to mitochondrial ribosomes in a GTP-dependent manner. The protein is Translation factor GUF1 homolog, mitochondrial of Phaeodactylum tricornutum (strain CCAP 1055/1).